Consider the following 225-residue polypeptide: Peptidyl-tRNA hydrolase (225 aa).

Residue tyrosine 14 coordinates tRNA. The active-site Proton acceptor is the histidine 19. 3 residues coordinate tRNA: phenylalanine 64, asparagine 66, and asparagine 112. Residues 184–225 (ALRMQPPKPEKPKPAAKAPEAQAPEAAPDERSALQKLADRFR) are disordered. Over residues 198-209 (AAKAPEAQAPEA) the composition is skewed to low complexity. A compositionally biased stretch (basic and acidic residues) spans 211-225 (PDERSALQKLADRFR).

This sequence belongs to the PTH family. As to quaternary structure, monomer.

It is found in the cytoplasm. The enzyme catalyses an N-acyl-L-alpha-aminoacyl-tRNA + H2O = an N-acyl-L-amino acid + a tRNA + H(+). In terms of biological role, hydrolyzes ribosome-free peptidyl-tRNAs (with 1 or more amino acids incorporated), which drop off the ribosome during protein synthesis, or as a result of ribosome stalling. Its function is as follows. Catalyzes the release of premature peptidyl moieties from peptidyl-tRNA molecules trapped in stalled 50S ribosomal subunits, and thus maintains levels of free tRNAs and 50S ribosomes. The sequence is that of Peptidyl-tRNA hydrolase from Cereibacter sphaeroides (strain ATCC 17023 / DSM 158 / JCM 6121 / CCUG 31486 / LMG 2827 / NBRC 12203 / NCIMB 8253 / ATH 2.4.1.) (Rhodobacter sphaeroides).